A 409-amino-acid chain; its full sequence is Coagulation factor IX (409 aa).

Ca(2+) contacts are provided by tyrosine 1, asparagine 2, glutamate 7, glutamate 8, glutamate 16, glutamate 18, glutamate 21, glutamate 22, glutamate 27, glutamate 28, and glutamate 31. One can recognise a Gla domain in the interval 1–47; sequence YNSGKLEESFVRGNLERECIEEKCSFEEAREVFENTEKTNEFWKQYV. 4-carboxyglutamate occurs at positions 7, 8, 16, 18, 21, 22, 27, 28, 31, 34, 37, and 41. Glutamate 16 provides a ligand contact to Mg(2+). The cysteines at positions 19 and 24 are disulfide-linked. Residue glutamate 21 participates in Mg(2+) binding. Glutamate 27 contributes to the Mg(2+) binding site. A Mg(2+)-binding site is contributed by glutamate 31. 5 residues coordinate Ca(2+): glutamate 37, glutamate 41, aspartate 48, glycine 49, and glutamine 51. Mg(2+) contacts are provided by glutamate 37 and glutamate 41. Residues 48–84 enclose the EGF-like 1; calcium-binding domain; that stretch reads DGDQCEPNPCLNGGLCKDDINSYECWCQVGFEGKNCE. 10 cysteine pairs are disulfide-bonded: cysteine 52-cysteine 63, cysteine 57-cysteine 72, cysteine 74-cysteine 83, cysteine 89-cysteine 100, cysteine 96-cysteine 110, cysteine 112-cysteine 125, cysteine 133-cysteine 291, cysteine 208-cysteine 224, cysteine 338-cysteine 352, and cysteine 363-cysteine 391. Aspartate 65 and aspartate 66 together coordinate Ca(2+). Aspartate 65 is subject to (3R)-3-hydroxyaspartate. The residue at position 69 (serine 69) is a Phosphoserine. Residues 85–126 enclose the EGF-like 2 domain; sequence LDATCNIKNGRCKQFCKTGADSKVLCSCTTGYRLAPDQKSCK. The propeptide at 148 to 182 is activation peptide; that stretch reads AEIIFSNMDYENSTEVEPILDSLTESNQSSDDFIR. Sulfotyrosine is present on tyrosine 157. At serine 160 the chain carries Phosphoserine. At threonine 161 the chain carries Phosphothreonine; alternate. O-linked (GalNAc...) threonine; alternate glycosylation occurs at threonine 161. Threonine 171 carries O-linked (GalNAc...) threonine glycosylation. Asparagine 174 is a glycosylation site (N-linked (GlcNAc...) asparagine). A Peptidase S1 domain is found at 183–409; that stretch reads IVGGENAKPG…YTKVSRYVNW (227 aa). Catalysis depends on histidine 223, which acts as the Charge relay system. Ca(2+) contacts are provided by glutamate 237, asparagine 239, glutamate 242, glutamate 244, and glutamate 247. N-linked (GlcNAc...) asparagine glycosylation is present at asparagine 262. The active-site Charge relay system is the aspartate 271. The Charge relay system role is filled by serine 367.

This sequence belongs to the peptidase S1 family. Heterodimer of a light chain and a heavy chain; disulfide-linked. Interacts (inactive and activated) with F11 (activated) in calcium-dependent manner. Interacts with SERPINC1. Post-translationally, activated by factor XIa, which excises the activation peptide. The propeptide can also be removed by snake venom protease. Activated by coagulation factor VIIa-tissue factor (F7-F3) complex in calcium-dependent manner. In terms of processing, the iron and 2-oxoglutarate dependent 3-hydroxylation of aspartate and asparagine is (R) stereospecific within EGF domains.

It is found in the secreted. The catalysed reaction is Selective cleavage of Arg-|-Ile bond in factor X to form factor Xa.. Functionally, factor IX is a vitamin K-dependent plasma protein that participates in the intrinsic pathway of blood coagulation by converting factor X to its active form in the presence of Ca(2+) ions, phospholipids, and factor VIIIa. The chain is Coagulation factor IX (F9) from Sus scrofa (Pig).